The primary structure comprises 587 residues: Trans-activating transcriptional regulatory protein (587 aa).

This sequence belongs to the nucleopolyhedrovirus IE-1 protein family.

Regulatory transcriptional protein, which trans-activates gene expression from early baculovirus promoters. Can also trans-activate its own promoter, suggesting that it is autoregulated during normal infection of insect cells. The protein is Trans-activating transcriptional regulatory protein (IE1) of Bombyx mori nuclear polyhedrosis virus (BmNPV).